The primary structure comprises 503 residues: Diels-Alderase cghA (503 aa).

This sequence belongs to the Diels-Alderase family.

It catalyses the reaction (2S)-3-[(2S)-3,5-dioxo-4-[(2E,4R,6R,8E,10E,12E)-4,6,12-trimethyltetradeca-2,8,10,12-tetraenoyl]pyrrolidin-2-yl]-2-hydroxy-2-methylpropanoate = sch 210972. The protein operates within secondary metabolite biosynthesis. Its function is as follows. Diels-Alderase; part of the gene cluster that mediates the biosynthesis of the tetramic acid Sch210972, a potential anti-HIV fungal natural product that contains a decalin core. The PKS module of cghG together with the enoylreductase cghC catalyze the formation of the polyketide unit which is then conjugated to 4-hydroxyl-4-methyl glutamate (HMG) by the condensation domain of the cghG NRPS module. One unique structural feature of Sch210972 is the tetramic acid motif proposed to be derived from the non-proteinogenic amino acid HMG, by a Dieckmann-type condensation catalyzed by the reductase domain of cghG. The aldolase cghB catalyzes the aldol condensation of 2 molecules of pyruvic acid to yield the intermediate 4-hydroxyl-4-methyl-2-oxoglutarate (HMOG), which can then be stereoselectively transaminated by an unidentified enzyme to form HMG. The Diels-Alderase cghA then uses the Dieckmann product released by cghG as substrate and catalyzes the Diels-Alder cycloaddition to form the decalin ring of Sch210972. CghA also suppresses the nonenzymatic formation of the alternative stereoisomer. In Chaetomium globosum (strain ATCC 6205 / CBS 148.51 / DSM 1962 / NBRC 6347 / NRRL 1970) (Soil fungus), this protein is Diels-Alderase cghA.